A 182-amino-acid polypeptide reads, in one-letter code: ATP synthase subunit delta (182 aa).

Belongs to the ATPase delta chain family. In terms of assembly, F-type ATPases have 2 components, F(1) - the catalytic core - and F(0) - the membrane proton channel. F(1) has five subunits: alpha(3), beta(3), gamma(1), delta(1), epsilon(1). CF(0) has four main subunits: a(1), b(1), b'(1) and c(10-14). The alpha and beta chains form an alternating ring which encloses part of the gamma chain. F(1) is attached to F(0) by a central stalk formed by the gamma and epsilon chains, while a peripheral stalk is formed by the delta, b and b' chains.

Its subcellular location is the cellular thylakoid membrane. F(1)F(0) ATP synthase produces ATP from ADP in the presence of a proton or sodium gradient. F-type ATPases consist of two structural domains, F(1) containing the extramembraneous catalytic core and F(0) containing the membrane proton channel, linked together by a central stalk and a peripheral stalk. During catalysis, ATP synthesis in the catalytic domain of F(1) is coupled via a rotary mechanism of the central stalk subunits to proton translocation. In terms of biological role, this protein is part of the stalk that links CF(0) to CF(1). It either transmits conformational changes from CF(0) to CF(1) or is implicated in proton conduction. The polypeptide is ATP synthase subunit delta (Synechococcus sp. (strain CC9902)).